A 286-amino-acid polypeptide reads, in one-letter code: 4-diphosphocytidyl-2-C-methyl-D-erythritol kinase (286 aa).

The active site involves lysine 11. 94–104 is a binding site for ATP; that stretch reads PMGGGIGGGSS. Aspartate 136 is a catalytic residue.

This sequence belongs to the GHMP kinase family. IspE subfamily.

The enzyme catalyses 4-CDP-2-C-methyl-D-erythritol + ATP = 4-CDP-2-C-methyl-D-erythritol 2-phosphate + ADP + H(+). Its pathway is isoprenoid biosynthesis; isopentenyl diphosphate biosynthesis via DXP pathway; isopentenyl diphosphate from 1-deoxy-D-xylulose 5-phosphate: step 3/6. In terms of biological role, catalyzes the phosphorylation of the position 2 hydroxy group of 4-diphosphocytidyl-2C-methyl-D-erythritol. The sequence is that of 4-diphosphocytidyl-2-C-methyl-D-erythritol kinase from Pseudomonas putida (strain ATCC 700007 / DSM 6899 / JCM 31910 / BCRC 17059 / LMG 24140 / F1).